A 216-amino-acid chain; its full sequence is Cytidylate kinase (216 aa).

7–15 (GPAGTGKST) is a binding site for ATP.

This sequence belongs to the cytidylate kinase family. Type 1 subfamily.

The protein localises to the cytoplasm. It carries out the reaction CMP + ATP = CDP + ADP. The catalysed reaction is dCMP + ATP = dCDP + ADP. This chain is Cytidylate kinase, found in Chlamydia muridarum (strain MoPn / Nigg).